Here is a 298-residue protein sequence, read N- to C-terminus: Lipoyl synthase (298 aa).

Residues cysteine 40, cysteine 45, cysteine 51, cysteine 67, cysteine 71, cysteine 74, and serine 280 each coordinate [4Fe-4S] cluster. One can recognise a Radical SAM core domain in the interval 53-269 (AVRRTATFMI…KEIALSKGFS (217 aa)).

This sequence belongs to the radical SAM superfamily. Lipoyl synthase family. It depends on [4Fe-4S] cluster as a cofactor.

The protein localises to the cytoplasm. The enzyme catalyses [[Fe-S] cluster scaffold protein carrying a second [4Fe-4S](2+) cluster] + N(6)-octanoyl-L-lysyl-[protein] + 2 oxidized [2Fe-2S]-[ferredoxin] + 2 S-adenosyl-L-methionine + 4 H(+) = [[Fe-S] cluster scaffold protein] + N(6)-[(R)-dihydrolipoyl]-L-lysyl-[protein] + 4 Fe(3+) + 2 hydrogen sulfide + 2 5'-deoxyadenosine + 2 L-methionine + 2 reduced [2Fe-2S]-[ferredoxin]. It participates in protein modification; protein lipoylation via endogenous pathway; protein N(6)-(lipoyl)lysine from octanoyl-[acyl-carrier-protein]. Functionally, catalyzes the radical-mediated insertion of two sulfur atoms into the C-6 and C-8 positions of the octanoyl moiety bound to the lipoyl domains of lipoate-dependent enzymes, thereby converting the octanoylated domains into lipoylated derivatives. This is Lipoyl synthase from Geobacillus thermodenitrificans (strain NG80-2).